A 90-amino-acid polypeptide reads, in one-letter code: Conotoxin Im6.2 (90 aa).

An N-terminal signal peptide occupies residues 1–18; the sequence is MKLTILLLVAALLVLTQA. Residues 19–29 constitute a propeptide that is removed on maturation; that stretch reads RTERRRVKSRK. Cystine bridges form between Cys-61–Cys-75, Cys-68–Cys-79, and Cys-74–Cys-84. Residue Glu-89 is modified to Glutamic acid 1-amide.

Belongs to the conotoxin O2 superfamily. Expressed by the venom duct.

Its subcellular location is the secreted. Probable neurotoxin. This Conus imperialis (Imperial cone) protein is Conotoxin Im6.2.